Reading from the N-terminus, the 164-residue chain is Crossover junction endodeoxyribonuclease RuvC (164 aa).

Catalysis depends on residues Asp-7, Glu-67, and Asp-140. Mg(2+) contacts are provided by Asp-7, Glu-67, and Asp-140.

The protein belongs to the RuvC family. In terms of assembly, homodimer which binds Holliday junction (HJ) DNA. The HJ becomes 2-fold symmetrical on binding to RuvC with unstacked arms; it has a different conformation from HJ DNA in complex with RuvA. In the full resolvosome a probable DNA-RuvA(4)-RuvB(12)-RuvC(2) complex forms which resolves the HJ. Requires Mg(2+) as cofactor.

It localises to the cytoplasm. It carries out the reaction Endonucleolytic cleavage at a junction such as a reciprocal single-stranded crossover between two homologous DNA duplexes (Holliday junction).. Its function is as follows. The RuvA-RuvB-RuvC complex processes Holliday junction (HJ) DNA during genetic recombination and DNA repair. Endonuclease that resolves HJ intermediates. Cleaves cruciform DNA by making single-stranded nicks across the HJ at symmetrical positions within the homologous arms, yielding a 5'-phosphate and a 3'-hydroxyl group; requires a central core of homology in the junction. The consensus cleavage sequence is 5'-(A/T)TT(C/G)-3'. Cleavage occurs on the 3'-side of the TT dinucleotide at the point of strand exchange. HJ branch migration catalyzed by RuvA-RuvB allows RuvC to scan DNA until it finds its consensus sequence, where it cleaves and resolves the cruciform DNA. This Pelotomaculum thermopropionicum (strain DSM 13744 / JCM 10971 / SI) protein is Crossover junction endodeoxyribonuclease RuvC.